The following is a 242-amino-acid chain: Type III pantothenate kinase (242 aa).

Residue 5–12 (DLGNTRLK) coordinates ATP. Residues Y94 and 100 to 103 (GCDR) each bind substrate. Catalysis depends on D102, which acts as the Proton acceptor. Residue T124 coordinates ATP. T175 is a binding site for substrate.

It belongs to the type III pantothenate kinase family. Homodimer. It depends on NH4(+) as a cofactor. The cofactor is K(+).

The protein resides in the cytoplasm. The enzyme catalyses (R)-pantothenate + ATP = (R)-4'-phosphopantothenate + ADP + H(+). It participates in cofactor biosynthesis; coenzyme A biosynthesis; CoA from (R)-pantothenate: step 1/5. Catalyzes the phosphorylation of pantothenate (Pan), the first step in CoA biosynthesis. This chain is Type III pantothenate kinase, found in Psychrobacter cryohalolentis (strain ATCC BAA-1226 / DSM 17306 / VKM B-2378 / K5).